The primary structure comprises 555 residues: Sesquiterpene synthase 31 (555 aa).

Positions 308, 312, 451, 455, and 459 each coordinate Mg(2+). The DDXXD motif motif lies at aspartate 308 to aspartate 312.

Belongs to the terpene synthase family. Tpsa subfamily. The cofactor is Mg(2+). Requires Mn(2+) as cofactor. Expressed in stem and leaf trichomes. Detected in roots, fruits and flowers.

The protein localises to the cytoplasm. It carries out the reaction (2E,6E)-farnesyl diphosphate = viridiflorene + diphosphate. The protein operates within secondary metabolite biosynthesis; terpenoid biosynthesis. Functionally, sesquiterpene synthase involved in the production of viridiflorene from (E,E)-farnesyl diphosphate (FPP). Has no activity with (Z,Z)-FPP. Can act with a low efficiency as a monoterpene synthase with geranyl diphosphate as substrate. This chain is Sesquiterpene synthase 31, found in Solanum lycopersicum (Tomato).